The following is a 354-amino-acid chain: Rhodopsin (354 aa).

The Extracellular portion of the chain corresponds to Met1–Ala36. Residues Asn2 and Asn15 are each glycosylated (N-linked (GlcNAc...) asparagine). A helical membrane pass occupies residues Tyr37 to Val61. Topologically, residues Thr62–Asn73 are cytoplasmic. The chain crosses the membrane as a helical span at residues Tyr74–Tyr96. The Extracellular portion of the chain corresponds to Thr97–Cys110. Cys110 and Cys187 are joined by a disulfide. A helical transmembrane segment spans residues Asn111 to Ile133. The short motif at Glu134–Trp136 is the 'Ionic lock' involved in activated form stabilization element. Over Glu134–His152 the chain is Cytoplasmic. The helical transmembrane segment at Ala153–Val173 threads the bilayer. Over Gly174 to Ser202 the chain is Extracellular. The chain crosses the membrane as a helical span at residues Phe203 to Gly224. The Cytoplasmic portion of the chain corresponds to Arg225–Arg252. Residues Met253 to Tyr274 form a helical membrane-spanning segment. The Extracellular portion of the chain corresponds to Ile275 to Leu286. Residues Phe287–Cys308 traverse the membrane as a helical segment. N6-(retinylidene)lysine is present on Lys296. Residues Met309–Ala354 lie on the Cytoplasmic side of the membrane. Residues Cys322 and Cys323 are each lipidated (S-palmitoyl cysteine). Residues Glu332 to Ala354 are disordered. The segment covering Ala334–Ala354 has biased composition (low complexity).

Belongs to the G-protein coupled receptor 1 family. Opsin subfamily. Phosphorylated on some or all of the serine and threonine residues present in the C-terminal region. In terms of processing, contains one covalently linked retinal chromophore.

It localises to the membrane. Its subcellular location is the cell projection. The protein localises to the cilium. It is found in the photoreceptor outer segment. Functionally, photoreceptor required for image-forming vision at low light intensity. While most salt water fish species use retinal as chromophore, most freshwater fish use 3-dehydroretinal, or a mixture of retinal and 3-dehydroretinal. Light-induced isomerization of 11-cis to all-trans retinal triggers a conformational change that activates signaling via G-proteins. Subsequent receptor phosphorylation mediates displacement of the bound G-protein alpha subunit by arrestin and terminates signaling. This is Rhodopsin (rho) from Oryzias latipes (Japanese rice fish).